A 296-amino-acid polypeptide reads, in one-letter code: Acetylglutamate kinase (296 aa).

Substrate contacts are provided by residues G69–G70, R91, and N193.

It belongs to the acetylglutamate kinase family. ArgB subfamily.

The protein localises to the cytoplasm. It carries out the reaction N-acetyl-L-glutamate + ATP = N-acetyl-L-glutamyl 5-phosphate + ADP. It functions in the pathway amino-acid biosynthesis; L-arginine biosynthesis; N(2)-acetyl-L-ornithine from L-glutamate: step 2/4. Its function is as follows. Catalyzes the ATP-dependent phosphorylation of N-acetyl-L-glutamate. The polypeptide is Acetylglutamate kinase (Delftia acidovorans (strain DSM 14801 / SPH-1)).